We begin with the raw amino-acid sequence, 123 residues long: Alpha-lactalbumin B/C (123 aa).

The region spanning 1–123 (KQFTKCQLSQ…KLEQWLCEEL (123 aa)) is the C-type lysozyme domain. 4 disulfide bridges follow: C6/C120, C28/C111, C61/C77, and C73/C91. The Ca(2+) site is built by K79, D82, D84, D87, and D88.

It belongs to the glycosyl hydrolase 22 family. In terms of assembly, lactose synthase (LS) is a heterodimer of a catalytic component, beta1,4-galactosyltransferase (beta4Gal-T1) and a regulatory component, alpha-lactalbumin (LA). As to expression, mammary gland specific. Secreted in milk.

The protein resides in the secreted. Functionally, regulatory subunit of lactose synthase, changes the substrate specificity of galactosyltransferase in the mammary gland making glucose a good acceptor substrate for this enzyme. This enables LS to synthesize lactose, the major carbohydrate component of milk. In other tissues, galactosyltransferase transfers galactose onto the N-acetylglucosamine of the oligosaccharide chains in glycoproteins. This chain is Alpha-lactalbumin B/C, found in Equus caballus (Horse).